A 304-amino-acid polypeptide reads, in one-letter code: Glutaminase (304 aa).

Ser63, Asn114, Glu158, Asn165, Tyr189, Tyr240, and Val258 together coordinate substrate.

This sequence belongs to the glutaminase family. As to quaternary structure, homotetramer.

It catalyses the reaction L-glutamine + H2O = L-glutamate + NH4(+). This Shewanella baltica (strain OS195) protein is Glutaminase.